A 186-amino-acid chain; its full sequence is Transcription factor HES-3 (186 aa).

The 49-residue stretch at 1–49 folds into the bHLH domain; it reads MEKKRRARINVSLEQLKSLLEKHYSHQIRKRKLEKADILELSVKYMRSL. Residues 65 to 99 enclose the Orange domain; it reads QPSGFRSCLPGVSQLLRRGDEVGSGLRCPLVPESA. Residues 128-186 are disordered; it reads APAAGGPRSPPPLLLLPESLPGSSASVPPPQPASSRCAESPGLGLRVWRPWGSPGDDLN. Residues 142–153 are compositionally biased toward low complexity; sequence LLPESLPGSSAS. A WRPW motif motif is present at residues 175 to 178; sequence WRPW.

In terms of assembly, transcription repression requires formation of a complex with a corepressor protein of the Groucho/TLE family.

It localises to the nucleus. In terms of biological role, transcriptional repressor of genes that require a bHLH protein for their transcription. This is Transcription factor HES-3 (HES3) from Homo sapiens (Human).